The primary structure comprises 204 residues: Large ribosomal subunit protein eL15A (204 aa).

The segment at 164-185 (LTATGKKSRGINKGHKFNNTKA) is disordered. Over residues 169-185 (KKSRGINKGHKFNNTKA) the composition is skewed to basic residues.

The protein belongs to the eukaryotic ribosomal protein eL15 family. Component of the large ribosomal subunit (LSU). Mature yeast ribosomes consist of a small (40S) and a large (60S) subunit. The 40S small subunit contains 1 molecule of ribosomal RNA (18S rRNA) and 33 different proteins (encoded by 57 genes). The large 60S subunit contains 3 rRNA molecules (25S, 5.8S and 5S rRNA) and 46 different proteins (encoded by 81 genes).

The protein resides in the cytoplasm. Component of the ribosome, a large ribonucleoprotein complex responsible for the synthesis of proteins in the cell. The small ribosomal subunit (SSU) binds messenger RNAs (mRNAs) and translates the encoded message by selecting cognate aminoacyl-transfer RNA (tRNA) molecules. The large subunit (LSU) contains the ribosomal catalytic site termed the peptidyl transferase center (PTC), which catalyzes the formation of peptide bonds, thereby polymerizing the amino acids delivered by tRNAs into a polypeptide chain. The nascent polypeptides leave the ribosome through a tunnel in the LSU and interact with protein factors that function in enzymatic processing, targeting, and the membrane insertion of nascent chains at the exit of the ribosomal tunnel. The protein is Large ribosomal subunit protein eL15A of Saccharomyces cerevisiae (strain ATCC 204508 / S288c) (Baker's yeast).